Reading from the N-terminus, the 533-residue chain is Suppressor of cytokine signaling 6 (533 aa).

2 disordered regions span residues 54 to 136 (CDIG…WPLR) and 177 to 199 (ELRD…PGDL). Basic and acidic residues predominate over residues 59–69 (EDEKGKNRSKS). Positions 76–88 (LKRRLSAKQKTKG) are enriched in basic residues. Basic and acidic residues predominate over residues 177-189 (ELRDLQPEPRPES). Residues 382–489 (WYWGPITRWE…TYPVRLTNPV (108 aa)) enclose the SH2 domain. The region spanning 484 to 533 (RLTNPVSRFMQVRSLQYLCRFVIRQYTRIDLIQKLPLPNKMKDYLQEKHY) is the SOCS box domain.

Interacts with KIT (phosphorylated). Interacts with RBCK1. Interacts with phosphorylated IRS4. Interacts with PIM3.

The protein operates within protein modification; protein ubiquitination. Functionally, SOCS family proteins form part of a classical negative feedback system that regulates cytokine signal transduction. May be a substrate recognition component of a SCF-like ECS (Elongin BC-CUL2/5-SOCS-box protein) E3 ubiquitin-protein ligase complex which mediates the ubiquitination and subsequent proteasomal degradation of target proteins. Regulates KIT degradation by ubiquitination of the tyrosine-phosphorylated receptor. The polypeptide is Suppressor of cytokine signaling 6 (Socs6) (Mus musculus (Mouse)).